A 605-amino-acid chain; its full sequence is Hepatocyte nuclear factor 1-alpha-A (605 aa).

The dimerization stretch occupies residues 1-31; it reads MASQLSYLQRELLQALLESGVTKEALKKALA. Residues 1–32 enclose the HNF-p1 domain; it reads MASQLSYLQRELLQALLESGVTKEALKKALAD. A disordered region spans residues 57-81; sequence QLPNGLGESHISEDESSDDGEDFTP. Residues 85 to 180 form the POU-specific atypical domain; that stretch reads KELERLSPEE…IARLFTFTEF (96 aa). 6 interaction with DNA regions span residues 128–130, 141–147, 153–156, 206–209, 266–268, and 273–276; these read QRE, HLSQHLN, KTQK, RFKW, RVY, and NRRK. The Nuclear localization signal motif lies at 200-208; it reads KKMRRNRFK. The segment at residues 202–282 is a DNA-binding region (homeobox; HNF1-type); that stretch reads MRRNRFKWGP…NRRKEEAFRH (81 aa). The segment covering 321–335 has biased composition (polar residues); that stretch reads DRSAVMANSQSTPSP. The segment at 321-343 is disordered; the sequence is DRSAVMANSQSTPSPSALEPSHS. Residues 448–453 are not present in other members of the HNF1 family; the sequence is PSHQLH.

Belongs to the HNF1 homeobox family. Binds DNA as dimer. Forms a homodimer or heterodimer with HNF1-alpha-B. Potentially also form a heterodimer with HNF1-beta. In terms of tissue distribution, protein expressed in liver, stomach, small intestine, colon and kidney. Not expressed in spleen, lung, blood, heart muscle, skeletal muscle, testis and brain.

It is found in the nucleus. Functionally, transcriptional activator that regulates the tissue specific expression of multiple genes, especially in pancreas and liver. Binds to the hepatocyte specific promoter element HP1. Binds to the inverted palindrome 5'-GTTAATNATTAAC-3'. This chain is Hepatocyte nuclear factor 1-alpha-A (hnf1a-a), found in Xenopus laevis (African clawed frog).